A 366-amino-acid polypeptide reads, in one-letter code: Ferredoxin--NADP reductase (366 aa).

Residues Asp51, Gln59, Tyr64, Val104, Phe139, Asp308, and Thr349 each coordinate FAD.

Belongs to the ferredoxin--NADP reductase type 2 family. In terms of assembly, homodimer. It depends on FAD as a cofactor.

The enzyme catalyses 2 reduced [2Fe-2S]-[ferredoxin] + NADP(+) + H(+) = 2 oxidized [2Fe-2S]-[ferredoxin] + NADPH. This chain is Ferredoxin--NADP reductase, found in Polaromonas sp. (strain JS666 / ATCC BAA-500).